Consider the following 274-residue polypeptide: Bis(5'-nucleosyl)-tetraphosphatase, symmetrical (274 aa).

It belongs to the Ap4A hydrolase family.

It catalyses the reaction P(1),P(4)-bis(5'-adenosyl) tetraphosphate + H2O = 2 ADP + 2 H(+). Hydrolyzes diadenosine 5',5'''-P1,P4-tetraphosphate to yield ADP. The polypeptide is Bis(5'-nucleosyl)-tetraphosphatase, symmetrical (Shewanella sp. (strain W3-18-1)).